A 198-amino-acid polypeptide reads, in one-letter code: Holliday junction branch migration complex subunit RuvA (198 aa).

The tract at residues 1 to 64 (MYEYIKGEYM…EDFIGLYGFE (64 aa)) is domain I. The interval 65-143 (SLEELEMFKM…TDELLNCIDE (79 aa)) is domain II. The segment at 144–154 (FDDVTQDNSLA) is flexible linker. The interval 154–198 (AVSEALSALISLGYTEKEAEKVLRDVDKSESVENIIKSALVKLMG) is domain III.

The protein belongs to the RuvA family. Homotetramer. Forms an RuvA(8)-RuvB(12)-Holliday junction (HJ) complex. HJ DNA is sandwiched between 2 RuvA tetramers; dsDNA enters through RuvA and exits via RuvB. An RuvB hexamer assembles on each DNA strand where it exits the tetramer. Each RuvB hexamer is contacted by two RuvA subunits (via domain III) on 2 adjacent RuvB subunits; this complex drives branch migration. In the full resolvosome a probable DNA-RuvA(4)-RuvB(12)-RuvC(2) complex forms which resolves the HJ.

It localises to the cytoplasm. Functionally, the RuvA-RuvB-RuvC complex processes Holliday junction (HJ) DNA during genetic recombination and DNA repair, while the RuvA-RuvB complex plays an important role in the rescue of blocked DNA replication forks via replication fork reversal (RFR). RuvA specifically binds to HJ cruciform DNA, conferring on it an open structure. The RuvB hexamer acts as an ATP-dependent pump, pulling dsDNA into and through the RuvAB complex. HJ branch migration allows RuvC to scan DNA until it finds its consensus sequence, where it cleaves and resolves the cruciform DNA. This is Holliday junction branch migration complex subunit RuvA from Clostridium botulinum (strain Eklund 17B / Type B).